Reading from the N-terminus, the 313-residue chain is Putative olfactory receptor 2B3 (313 aa).

Residues 1 to 25 (MNWENESSPKEFILLGFSDRAWLQM) lie on the Extracellular side of the membrane. N5 carries an N-linked (GlcNAc...) asparagine glycan. Residues 26–49 (PLFVVLLISYTITIFGNVSIMMVC) form a helical membrane-spanning segment. Over 50-57 (ILDPKLHT) the chain is Cytoplasmic. A helical transmembrane segment spans residues 58-79 (PMYFFLTNLSILDLCYTTTTVP). The Extracellular portion of the chain corresponds to 80–100 (HMLVNIGCNKKTISYAGCVAH). A disulfide bridge connects residues C97 and C189. Residues 101–120 (LIIFLALGATECLLLAVMSF) traverse the membrane as a helical segment. The Cytoplasmic portion of the chain corresponds to 121-139 (DRYVAVCRPLHYVVIMNYW). A helical membrane pass occupies residues 140–158 (FCLRMAAFSWLIGFGNSVL). Residues 159–195 (QSSLTLNMPRCGHQEVDHFFCEVPALLKLSCADTKPI) lie on the Extracellular side of the membrane. The helical transmembrane segment at 196 to 219 (EAELFFFSVLILLIPVTLILISYG) threads the bilayer. Residues 220–236 (FIAQAVLKIRSAEGRQK) are Cytoplasmic-facing. The helical transmembrane segment at 237-259 (AFGTCGSHMIVVSLFYGTAIYMY) threads the bilayer. At 260-272 (LQPPSSTSKDWGK) the chain is on the extracellular side. A helical membrane pass occupies residues 273-292 (MVSLFYGIITSMLNSLIYSL). Residues 293–313 (RNKDMKEAFKRLMPRIFFCKK) lie on the Cytoplasmic side of the membrane.

This sequence belongs to the G-protein coupled receptor 1 family.

It localises to the cell membrane. Odorant receptor. The sequence is that of Putative olfactory receptor 2B3 (OR2B3) from Homo sapiens (Human).